A 702-amino-acid chain; its full sequence is Elongation factor G 2 (702 aa).

The tr-type G domain maps to 8-285 (DMVRNIGISA…AVTYYLPSPA (278 aa)). GTP-binding positions include 17–24 (AHIDSGKT), 84–88 (DTPGH), and 138–141 (NKLD).

The protein belongs to the TRAFAC class translation factor GTPase superfamily. Classic translation factor GTPase family. EF-G/EF-2 subfamily.

Its subcellular location is the cytoplasm. Functionally, catalyzes the GTP-dependent ribosomal translocation step during translation elongation. During this step, the ribosome changes from the pre-translocational (PRE) to the post-translocational (POST) state as the newly formed A-site-bound peptidyl-tRNA and P-site-bound deacylated tRNA move to the P and E sites, respectively. Catalyzes the coordinated movement of the two tRNA molecules, the mRNA and conformational changes in the ribosome. This Bdellovibrio bacteriovorus (strain ATCC 15356 / DSM 50701 / NCIMB 9529 / HD100) protein is Elongation factor G 2.